We begin with the raw amino-acid sequence, 72 residues long: Translation initiation factor IF-1 (72 aa).

Positions 1 to 72 (MAREDHIEME…SKGRIVYRAR (72 aa)) constitute an S1-like domain.

The protein belongs to the IF-1 family. Component of the 30S ribosomal translation pre-initiation complex which assembles on the 30S ribosome in the order IF-2 and IF-3, IF-1 and N-formylmethionyl-tRNA(fMet); mRNA recruitment can occur at any time during PIC assembly.

It localises to the cytoplasm. In terms of biological role, one of the essential components for the initiation of protein synthesis. Stabilizes the binding of IF-2 and IF-3 on the 30S subunit to which N-formylmethionyl-tRNA(fMet) subsequently binds. Helps modulate mRNA selection, yielding the 30S pre-initiation complex (PIC). Upon addition of the 50S ribosomal subunit IF-1, IF-2 and IF-3 are released leaving the mature 70S translation initiation complex. This chain is Translation initiation factor IF-1, found in Chromohalobacter salexigens (strain ATCC BAA-138 / DSM 3043 / CIP 106854 / NCIMB 13768 / 1H11).